The sequence spans 688 residues: Protein sel-1 homolog 2 (688 aa).

A signal peptide spans Met-1 to Ala-23. Over Glu-24–Thr-662 the chain is Extracellular. N-linked (GlcNAc...) asparagine glycosylation is present at Asn-34. Sel1-like repeat units follow at residues Gly-107–Asn-142, Leu-143–Ser-178, Cys-179–Asn-214, Met-215–Ala-250, Val-297–Ser-333, Ala-334–Asn-370, Ala-371–Trp-406, Pro-407–Gln-442, Pro-443–His-478, Ala-551–His-586, and Ala-588–Pro-623. Residues Ile-663–Leu-683 traverse the membrane as a helical segment. The Cytoplasmic portion of the chain corresponds to Arg-684–Gly-688.

This sequence belongs to the sel-1 family.

The protein resides in the membrane. The protein localises to the cell projection. It localises to the cilium. It is found in the nucleus speckle. In Homo sapiens (Human), this protein is Protein sel-1 homolog 2 (SEL1L2).